Consider the following 177-residue polypeptide: O-acetyl-ADP-ribose deacetylase (177 aa).

The Macro domain occupies 1–175 (MKSRIHVQHG…LYERLLTQQG (175 aa)). Substrate contacts are provided by residues 11-12 (DI), asparagine 25, 33-35 (GVD), and 122-126 (STGAY). The active-site Proton acceptor is the aspartate 35.

This sequence belongs to the MacroD-type family. YmdB subfamily. Homodimer. Interacts with RNase III.

It carries out the reaction 3''-O-acetyl-ADP-D-ribose + H2O = ADP-D-ribose + acetate + H(+). It catalyses the reaction 2''-O-acetyl-ADP-D-ribose + H2O = ADP-D-ribose + acetate + H(+). In terms of biological role, deacetylates O-acetyl-ADP ribose to yield ADP-ribose and free acetate. Down-regulates ribonuclease 3 (RNase III) activity. Acts by interacting directly with the region of the ribonuclease that is required for dimerization/activation. The sequence is that of O-acetyl-ADP-ribose deacetylase from Citrobacter koseri (strain ATCC BAA-895 / CDC 4225-83 / SGSC4696).